The primary structure comprises 292 residues: MQKSGIFILNKPSNISTYQLINQVKKKLNIKKVGHCGTLDLLATGVVICLVNNATKISDYLLNANKAYQVKIKLFTLTDSFDAEGNIIQTQTPFNISLDQINKVISKYNNYTYNQYPPIYSSIKVDGKKLYEYALTNQNVEIKSRKVTIYKTSLLSYDQKNYEIFLDVKCSKGTYIRSLAVDICKDLNTIGYVVYLNRTLSGNFKLENAIDLNNISWDHLISINDAIRTNDFKVVKYQNSLEIIQGKKIILNDINDDLVFISDDQNNILAVYQKYDNNIFKIKRGGLNNDIY.

Asp-40 (nucleophile) is an active-site residue.

Belongs to the pseudouridine synthase TruB family. Type 1 subfamily.

The enzyme catalyses uridine(55) in tRNA = pseudouridine(55) in tRNA. Its function is as follows. Responsible for synthesis of pseudouridine from uracil-55 in the psi GC loop of transfer RNAs. This Mycoplasma mycoides subsp. mycoides SC (strain CCUG 32753 / NCTC 10114 / PG1) protein is tRNA pseudouridine synthase B.